The following is an 803-amino-acid chain: Zinc finger protein 226 (803 aa).

Positions 8-78 constitute a KRAB domain; that stretch reads VTFKDVAVAF…TTATRRQGNL (71 aa). The segment at 252–274 adopts a C2H2-type 1; degenerate zinc-finger fold; the sequence is YQCNECKKPFSDLSSFDLHQQLQ. The C2H2-type 2; degenerate zinc-finger motif lies at 280–302; the sequence is LTCVERGKGFCYSPVLPVHQKVH. C2H2-type zinc fingers lie at residues 307 to 329, 335 to 357, 363 to 385, 391 to 413, 419 to 441, 447 to 469, 475 to 497, 503 to 525, 531 to 553, 559 to 581, 587 to 609, 615 to 637, 643 to 665, 671 to 693, 699 to 721, 727 to 749, and 755 to 777; these read LKCDECGKEFSQGAHLQTHQKVH, YKCKQCGKGFSRRSALNVHCKVH, YNCEECGRAFSQASHLQDHQRLH, FKCDACGKSFSRNSHLQSHQRVH, YKCEECGKGFICSSNLYIHQRVH, YKCEECGKGFSRPSSLQAHQGVH, YICTVCGKGFTLSSNLQAHQRVH, YKCNECGKSFRRNSHYQVHLVVH, YKCEICGKGFSQSSYLQIHQKAH, FKCEECGQGFNQSSRLQIHQLIH, YKCEECGKGFSRRADLKIHCRIH, YNCEECGKVFRQASNLLAHQRVH, FKCEECGKSFGRSAHLQAHQKVH, YKCDECGKGFKWSLNLDMHQRVH, YKCGECGKYFSQASSLQLHQSVH, YKCDVCGKVFSRSSQLQSHQRVH, and YKCEICGKSFSWRSNLTVHHRIH. Residues 781–803 are disordered; it reads KSYKSNRGGKNIRESTQEKKSIK. Over residues 791–803 the composition is skewed to basic and acidic residues; the sequence is NIRESTQEKKSIK.

This sequence belongs to the krueppel C2H2-type zinc-finger protein family.

It is found in the nucleus. Its function is as follows. May be involved in transcriptional regulation. The sequence is that of Zinc finger protein 226 (ZNF226) from Homo sapiens (Human).